A 651-amino-acid chain; its full sequence is Beta-glucuronidase (651 aa).

The first 22 residues, 1-22, serve as a signal peptide directing secretion; sequence MARGSAVAWAALGPLLWGCALG. 3 N-linked (GlcNAc...) asparagine glycosylation sites follow: asparagine 173, asparagine 272, and asparagine 420. The Proton donor role is filled by glutamate 451. Asparagine 631 is a glycosylation site (N-linked (GlcNAc...) asparagine).

The protein belongs to the glycosyl hydrolase 2 family. In terms of assembly, homotetramer. N-linked glycosylated with 3 to 4 oligosaccharide chains.

The protein resides in the lysosome. It catalyses the reaction a beta-D-glucuronoside + H2O = D-glucuronate + an alcohol. Inhibited by L-aspartic acid. Its function is as follows. Plays an important role in the degradation of dermatan and keratan sulfates. The protein is Beta-glucuronidase (GUSB) of Homo sapiens (Human).